The following is a 220-amino-acid chain: GILT-like protein CBG03282 (220 aa).

An N-terminal signal peptide occupies residues 1–22 (MTIIRTLFVYYSFLFILVLCSS). N-linked (GlcNAc...) asparagine glycosylation is present at N131.

This sequence belongs to the GILT family.

The protein resides in the secreted. The sequence is that of GILT-like protein CBG03282 from Caenorhabditis briggsae.